A 70-amino-acid chain; its full sequence is Large ribosomal subunit protein bL31 (70 aa).

Zn(2+)-binding residues include Cys-17, Cys-19, Cys-37, and Cys-40.

It belongs to the bacterial ribosomal protein bL31 family. Type A subfamily. In terms of assembly, part of the 50S ribosomal subunit. Requires Zn(2+) as cofactor.

Its function is as follows. Binds the 23S rRNA. This is Large ribosomal subunit protein bL31 from Clostridium acetobutylicum (strain ATCC 824 / DSM 792 / JCM 1419 / IAM 19013 / LMG 5710 / NBRC 13948 / NRRL B-527 / VKM B-1787 / 2291 / W).